A 265-amino-acid chain; its full sequence is MDAAKMYGAVLACTDEAVLPVSQVFDAIRELGNEGVEKLDPLVITSASSLSKFPVESSSVDLVVLIWKSLDFPIDQLTQEVLRVLKAGGTTLIRKSSQSAVGSGDKMIPDLENKLLLAGFSEIQALQSSVIKAKKPSWKIGSSFALKKVVKSSPKVQIDFDSDLIDENSLLSEEDLKKPELPSGDCEIGPTRKACKNCSCGRAEEEEKVLKLGLTAEQINNPQSACGSCGLGDAFRCSTCPYKGLPAFKMGEKVALSGNFLAADI.

Residues 1–147 (MDAAKMYGAV…WKIGSSFALK (147 aa)) are N-terminal SAM-like domain. Residues 147-176 (KKVVKSSPKVQIDFDSDLIDENSLLSEEDL) form a linker region. [2Fe-2S] cluster is bound by residues Cys-186, Cys-195, Cys-198, and Cys-200. Residues 186–200 (CEIGPTRKACKNCSC) form a fe-S binding site A region. Positions 226, 229, 237, and 240 each coordinate [4Fe-4S] cluster. 2 short sequence motifs (cx2C motif) span residues 226–229 (CGSC) and 237–240 (CSTC). A fe-S binding site B region spans residues 226–240 (CGSCGLGDAFRCSTC).

The protein belongs to the anamorsin family. In terms of assembly, monomer. Requires [2Fe-2S] cluster as cofactor. The cofactor is [4Fe-4S] cluster.

The protein resides in the cytoplasm. It localises to the mitochondrion intermembrane space. Component of the cytosolic iron-sulfur (Fe-S) protein assembly (CIA) machinery. Required for the maturation of extramitochondrial Fe-S proteins. Part of an electron transfer chain functioning in an early step of cytosolic Fe-S biogenesis, facilitating the de novo assembly of a [4Fe-4S] cluster on the cytosolic Fe-S scaffold complex. Electrons are transferred from NADPH via a FAD- and FMN-containing diflavin oxidoreductase. Together with the diflavin oxidoreductase, also required for the assembly of the diferric tyrosyl radical cofactor of ribonucleotide reductase (RNR), probably by providing electrons for reduction during radical cofactor maturation in the catalytic small subunit. In Medicago truncatula (Barrel medic), this protein is Anamorsin homolog.